Here is a 442-residue protein sequence, read N- to C-terminus: Cell division protein FtsZ (442 aa).

GTP-binding positions include 18–22 (GGGVN), 105–107 (GTG), Glu136, Arg140, and Asp184. Residues 329-341 (AAPAAEPVQQQVP) show a composition bias toward low complexity. The disordered stretch occupies residues 329-442 (AAPAAEPVQQ…DDLDVPSFLQ (114 aa)). Basic and acidic residues-rich tracts occupy residues 349–362 (PEKESIFGGAREEN) and 390–431 (NDRD…RDDR).

It belongs to the FtsZ family. In terms of assembly, homodimer. Polymerizes to form a dynamic ring structure in a strictly GTP-dependent manner. Interacts directly with several other division proteins.

The protein resides in the cytoplasm. Functionally, essential cell division protein that forms a contractile ring structure (Z ring) at the future cell division site. The regulation of the ring assembly controls the timing and the location of cell division. One of the functions of the FtsZ ring is to recruit other cell division proteins to the septum to produce a new cell wall between the dividing cells. Binds GTP and shows GTPase activity. This is Cell division protein FtsZ from Corynebacterium glutamicum (strain ATCC 13032 / DSM 20300 / JCM 1318 / BCRC 11384 / CCUG 27702 / LMG 3730 / NBRC 12168 / NCIMB 10025 / NRRL B-2784 / 534).